Here is a 40-residue protein sequence, read N- to C-terminus: Alpha-conotoxin GIC (40 aa).

Positions 1–20 (SDGRNDAAKAFDLISSTVKK) are excised as a propeptide. Disulfide bonds link C22-C28 and C23-C36. Residues 24–26 (SHP) are ser-Xaa-Pro motif, crucial for potent interaction with nAChR. Position 36 is a cysteine amide (C36).

Expressed by the venom duct.

It localises to the secreted. Its function is as follows. Alpha-conotoxins bind to the nicotinic acetylcholine receptors (nAChR) and inhibit them. This toxin reversibly blocks neuronal nAChRs (alpha-3/beta-2 = alpha-6 or -3/beta-2 or -3 &gt; alpha-3/beta-4 = alpha-4/beta-2). This chain is Alpha-conotoxin GIC, found in Conus geographus (Geography cone).